The following is a 436-amino-acid chain: MNFTKENCQFRKMLSTSSDLHGRLLRLSEPIAEILRRTQYTPQESSKVSTKDILLSLLPNTSSSRLANEESIKSLALACALLASSRSSTHELLSWIPENLSVMGESTFWEISRDCFSDFSSNSNAEKLVELVEDSEKIEMLPIVLPELKDGIEKSSLGKGSDAEDVSAAMARTPVGYAILAAHQLRWFVTQVKKPNLVKFCNLVVPCALTALDHWSPEVKGQGMITFVHLAKNVSSGDLGLYGDVVLDACCQNIASDDEIWIHVVELSVLLVTKIHPNNPRSPWYEKIMNEMLGHLERQPRNKERRITWLRFVEPLLNSLGLFLLAHFRRIFPLFFQWMHSDDAETVLLVLERLETVVRLTWIRHSPVFPRLVDELVSLYKESSMRKDRDDIRPLILRILMLLRQCKGLRFESAWSQYQEDPNLSTVSQHIWTSSS.

This is an uncharacterized protein from Arabidopsis thaliana (Mouse-ear cress).